The sequence spans 374 residues: Protein RecA (374 aa).

Residue 66-73 participates in ATP binding; sequence GPESSGKT. Residues 327–374 are disordered; that stretch reads LGVGVHPEESATEPGADAASAAPADAAPAVPAPTTAKATKSKAAAAKS. Residues 338–374 are compositionally biased toward low complexity; sequence TEPGADAASAAPADAAPAVPAPTTAKATKSKAAAAKS.

Belongs to the RecA family.

The protein resides in the cytoplasm. Its function is as follows. Can catalyze the hydrolysis of ATP in the presence of single-stranded DNA, the ATP-dependent uptake of single-stranded DNA by duplex DNA, and the ATP-dependent hybridization of homologous single-stranded DNAs. It interacts with LexA causing its activation and leading to its autocatalytic cleavage. The sequence is that of Protein RecA from Streptomyces lividans.